The chain runs to 200 residues: FMN-dependent NADH:quinone oxidoreductase (200 aa).

FMN is bound by residues Ser-10, 96 to 99, and 140 to 143; these read MYNF and SRGG.

The protein belongs to the azoreductase type 1 family. In terms of assembly, homodimer. The cofactor is FMN.

The catalysed reaction is 2 a quinone + NADH + H(+) = 2 a 1,4-benzosemiquinone + NAD(+). It catalyses the reaction N,N-dimethyl-1,4-phenylenediamine + anthranilate + 2 NAD(+) = 2-(4-dimethylaminophenyl)diazenylbenzoate + 2 NADH + 2 H(+). Quinone reductase that provides resistance to thiol-specific stress caused by electrophilic quinones. In terms of biological role, also exhibits azoreductase activity. Catalyzes the reductive cleavage of the azo bond in aromatic azo compounds to the corresponding amines. The protein is FMN-dependent NADH:quinone oxidoreductase of Photorhabdus laumondii subsp. laumondii (strain DSM 15139 / CIP 105565 / TT01) (Photorhabdus luminescens subsp. laumondii).